A 465-amino-acid polypeptide reads, in one-letter code: Branched-chain amino acid permease BcaP (465 aa).

12 consecutive transmembrane segments (helical) span residues 28–48, 56–76, 88–110, 149–169, 181–201, 219–239, 259–279, 309–329, 359–379, 380–400, 416–436, and 438–458; these read FLALGVGTIISTSIFTLPGQV, GVVFSYLLAALVAGFVALAYA, AYSWISVLFGEGFGWIAGWALLA, DGGIVDIISLLVILLSAIIVF, ILVVLKVAAVIAFIIVGITVI, FGGFSGIWSGVSMIFLAYIGF, GIIGSLLIAVVLFAAVTLVLV, VVTAIALAGMFIALLGMVLAG, VWTLAIVAIVIGAFFPFAFLA, QLISAGTLIAFMFVTLGIYSL, PFYPVLPALGFIGSLFVFWGL, and VQAKLYSGIWFLIGIAIYFAY.

This sequence belongs to the amino acid-polyamine-organocation (APC) superfamily.

Its subcellular location is the cell membrane. Its function is as follows. Branched-chain amino acid transport system that specifically transports branched-chain amino acids (BCAAs) (isoleucine, leucine and valine) and, to a lesser extent, methionine. Important for CodY-mediated regulation, and required for optimal growth in media containing free amino acids as the only amino acid source. The protein is Branched-chain amino acid permease BcaP of Lactococcus lactis subsp. cremoris (strain MG1363).